The following is a 777-amino-acid chain: DNA repair helicase/translocase XPB-R (777 aa).

The Helicase ATP-binding domain occupies 212 to 416 (AASDGALRSG…DLFHLVGPKL (205 aa)). 225–232 (LPCGSGKT) serves as a coordination point for ATP. Residues 369–372 (DEVH) carry the DEVH box motif. Residues 484 to 631 (IVKRHVAESS…GYTCSVTEFN (148 aa)) form the Helicase C-terminal domain.

The protein belongs to the helicase family. RAD25/XPB subfamily.

The enzyme catalyses Couples ATP hydrolysis with the unwinding of duplex DNA by translocating in the 3'-5' direction.. The catalysed reaction is ATP + H2O = ADP + phosphate + H(+). ATP-dependent 3'-5' DNA helicase/translocase; binds dsDNA rather than ssDNA, unzipping it in a translocase rather than classical helicase activity. Involved in nucleotide excision repair (NER) of damaged DNA. XPB-R is a paralog of XBP, but is not a component of the TFIIH basal transcription factor and is dispensable for RNA polymerase II transcription. This Trypanosoma brucei brucei (strain 927/4 GUTat10.1) protein is DNA repair helicase/translocase XPB-R.